Reading from the N-terminus, the 466-residue chain is Cysteine--tRNA ligase (466 aa).

Cysteine 27 serves as a coordination point for Zn(2+). The short motif at 29-39 (PTVYNYIHIGN) is the 'HIGH' region element. 3 residues coordinate Zn(2+): cysteine 207, histidine 232, and glutamate 236. The 'KMSKS' region motif lies at 264–268 (KMSKS). Lysine 267 contributes to the ATP binding site.

Belongs to the class-I aminoacyl-tRNA synthetase family. As to quaternary structure, monomer. The cofactor is Zn(2+).

Its subcellular location is the cytoplasm. The enzyme catalyses tRNA(Cys) + L-cysteine + ATP = L-cysteinyl-tRNA(Cys) + AMP + diphosphate. The polypeptide is Cysteine--tRNA ligase (Thermoanaerobacter pseudethanolicus (strain ATCC 33223 / 39E) (Clostridium thermohydrosulfuricum)).